Reading from the N-terminus, the 364-residue chain is D-alanine--D-alanine ligase A (364 aa).

In terms of domain architecture, ATP-grasp spans 145 to 348 (KRLLRDAGLN…YTDLITRLIE (204 aa)). 175–230 (ESKLGLPLFVKPANQGSSVGVSKVTSEEQYAIAVDLAFEFDHKVIVEQGIKGREIE) lines the ATP pocket. Residues Asp302, Glu315, and Asn317 each contribute to the Mg(2+) site.

Belongs to the D-alanine--D-alanine ligase family. Requires Mg(2+) as cofactor. The cofactor is Mn(2+).

It localises to the cytoplasm. It catalyses the reaction 2 D-alanine + ATP = D-alanyl-D-alanine + ADP + phosphate + H(+). It functions in the pathway cell wall biogenesis; peptidoglycan biosynthesis. Functionally, cell wall formation. The polypeptide is D-alanine--D-alanine ligase A (ddlA) (Escherichia coli O157:H7).